We begin with the raw amino-acid sequence, 136 residues long: Acyl-CoA thioesterase YbgC (136 aa).

Aspartate 18 is a catalytic residue.

The protein belongs to the 4-hydroxybenzoyl-CoA thioesterase family.

In terms of biological role, displays acyl-CoA thioesterase activity with short chain aliphatic acyl-CoA thioesters, such as propionyl-CoA and butyryl-CoA. Enzyme activity is relatively low, suggesting that the acyl-CoA thioesters used in the assays are not the physiological substrates. Has no detectable activity with 4-hydroxybenzoyl-CoA, lauroyl-CoA (C12:0), arachidoyl-CoA (C20:0) and arachidonoyl-CoA (C20:4). The protein is Acyl-CoA thioesterase YbgC (ybgC) of Haemophilus influenzae (strain ATCC 51907 / DSM 11121 / KW20 / Rd).